The chain runs to 226 residues: PKHD-type hydroxylase Sde_2812 (226 aa).

A Fe2OG dioxygenase domain is found at 78–178; it reads KIFPPLFNCY…RLASFFWLQS (101 aa). His-96, Asp-98, and His-159 together coordinate Fe cation. Arg-169 is a 2-oxoglutarate binding site.

It depends on Fe(2+) as a cofactor. L-ascorbate serves as cofactor.

The protein is PKHD-type hydroxylase Sde_2812 of Saccharophagus degradans (strain 2-40 / ATCC 43961 / DSM 17024).